A 400-amino-acid polypeptide reads, in one-letter code: Exodeoxyribonuclease 7 large subunit (400 aa).

It belongs to the XseA family. Heterooligomer composed of large and small subunits.

The protein localises to the cytoplasm. It catalyses the reaction Exonucleolytic cleavage in either 5'- to 3'- or 3'- to 5'-direction to yield nucleoside 5'-phosphates.. Bidirectionally degrades single-stranded DNA into large acid-insoluble oligonucleotides, which are then degraded further into small acid-soluble oligonucleotides. This chain is Exodeoxyribonuclease 7 large subunit, found in Clostridium kluyveri (strain NBRC 12016).